The following is a 147-amino-acid chain: Small ribosomal subunit protein uS12 (147 aa).

Belongs to the universal ribosomal protein uS12 family. As to quaternary structure, part of the 30S ribosomal subunit.

Functionally, with S4 and S5 plays an important role in translational accuracy. Located at the interface of the 30S and 50S subunits. This Sulfolobus acidocaldarius (strain ATCC 33909 / DSM 639 / JCM 8929 / NBRC 15157 / NCIMB 11770) protein is Small ribosomal subunit protein uS12.